We begin with the raw amino-acid sequence, 210 residues long: Redox-sensing transcriptional repressor Rex (210 aa).

Positions 17–56 (KYYRYLAELMDNDVDRISSKELSEKIGFTASQIRQDLNNF) form a DNA-binding region, H-T-H motif. 91-96 (GAGNIG) lines the NAD(+) pocket.

This sequence belongs to the transcriptional regulatory Rex family. Homodimer.

The protein resides in the cytoplasm. In terms of biological role, modulates transcription in response to changes in cellular NADH/NAD(+) redox state. This is Redox-sensing transcriptional repressor Rex from Clostridium novyi (strain NT).